Reading from the N-terminus, the 499-residue chain is Cytochrome P450 11B1, mitochondrial (499 aa).

A mitochondrion-targeting transit peptide spans 1–24 (MALRVTADVWLARPWQCLHRTRAL). Position 446 (cysteine 446) interacts with heme.

Belongs to the cytochrome P450 family. Requires heme as cofactor. In terms of tissue distribution, adrenal zona fasciculata/reticularis.

It localises to the mitochondrion inner membrane. The enzyme catalyses a steroid + 2 reduced [adrenodoxin] + O2 + 2 H(+) = an 11beta-hydroxysteroid + 2 oxidized [adrenodoxin] + H2O. It catalyses the reaction 21-hydroxyprogesterone + 2 reduced [adrenodoxin] + O2 + 2 H(+) = corticosterone + 2 oxidized [adrenodoxin] + H2O. It carries out the reaction 21-hydroxyprogesterone + 2 reduced [adrenodoxin] + O2 + 2 H(+) = 18-hydroxy-11-deoxycorticosterone + 2 oxidized [adrenodoxin] + H2O. The catalysed reaction is 21-hydroxyprogesterone + 2 reduced [adrenodoxin] + O2 + 2 H(+) = 19-hydroxy-11-deoxycorticosterone + 2 oxidized [adrenodoxin] + H2O. The enzyme catalyses 11-deoxycortisol + 2 reduced [adrenodoxin] + O2 + 2 H(+) = cortisol + 2 oxidized [adrenodoxin] + H2O. It catalyses the reaction cortisol + 2 reduced [adrenodoxin] + O2 + 2 H(+) = 18-hydroxycortisol + 2 oxidized [adrenodoxin] + H2O. It carries out the reaction 11-deoxycortisol + 2 reduced [adrenodoxin] + O2 + 2 H(+) = 18-hydroxy-11-deoxycortisol + 2 oxidized [adrenodoxin] + H2O. The protein operates within steroid biosynthesis; glucocorticoid biosynthesis. Its pathway is steroid hormone biosynthesis. Functionally, a cytochrome P450 monooxygenase involved in the biosynthesis of adrenal corticoids. Catalyzes a variety of reactions that are essential for many species, including detoxification, defense, and the formation of endogenous chemicals like steroid hormones. Steroid 11beta, 18- and 19-hydroxylase with preferred regioselectivity at 11beta, then 18, and lastly 19. Catalyzes the hydroxylation of 11-deoxycortisol and 11-deoxycorticosterone (21-hydroxyprogesterone) at 11beta position, yielding cortisol or corticosterone, respectively, but cannot produce aldosterone. Mechanistically, uses molecular oxygen inserting one oxygen atom into a substrate for hydroxylation and reducing the second into a water molecule. Two electrons are provided by NADPH via a two-protein mitochondrial transfer system comprising flavoprotein FDXR (adrenodoxin/ferredoxin reductase) and nonheme iron-sulfur protein FDX1 or FDX2 (adrenodoxin/ferredoxin). Due to its lack of 18-oxidation activity, it is incapable of generating aldosterone. Could also be involved in the androgen metabolic pathway. The polypeptide is Cytochrome P450 11B1, mitochondrial (Cyp11b1) (Rattus norvegicus (Rat)).